The sequence spans 163 residues: Probable histone H2A.4 (163 aa).

Disordered regions lie at residues 1–30 (MEVG…VSRS) and 134–163 (SAAA…AAAA). Over residues 12–21 (GAGGRRGGGG) the composition is skewed to gly residues. The segment covering 147-163 (KSPKKATTKSPKKAAAA) has biased composition (basic residues). Short sequence motifs (SPKK motif) lie at residues 148–151 (SPKK) and 156–159 (SPKK).

It belongs to the histone H2A family. The nucleosome is a histone octamer containing two molecules each of H2A, H2B, H3 and H4 assembled in one H3-H4 heterotetramer and two H2A-H2B heterodimers. The octamer wraps approximately 147 bp of DNA.

The protein localises to the nucleus. It localises to the chromosome. Core component of nucleosome. Nucleosomes wrap and compact DNA into chromatin, limiting DNA accessibility to the cellular machineries which require DNA as a template. Histones thereby play a central role in transcription regulation, DNA repair, DNA replication and chromosomal stability. DNA accessibility is regulated via a complex set of post-translational modifications of histones, also called histone code, and nucleosome remodeling. The protein is Probable histone H2A.4 of Oryza sativa subsp. indica (Rice).